Consider the following 114-residue polypeptide: As-peptide 126 (114 aa).

A signal peptide spans 1–22 (MSRALICSLALLAMLVISGTYA). Tandem repeats lie at residues 22-29 (ASPAANAE), 30-37 (ALAAANAE), 38-45 (ASAAANAE), 46-53 (PLAAANAE), 54-61 (PLAAANAE), 62-69 (PLAAANAD), 70-77 (PIAAANAE), 78-85 (PSAAANAE), and 86-93 (PLAAANAE). A 9 X 8 AA approximate tandem repeats of [AP]-[ILS]-[AP]-A-A-N-A-[DE] region spans residues 22-93 (ASPAANAEAL…AEPLAAANAE (72 aa)). Residues 23-104 (SPAANAEALA…SAGPSPLAAA (82 aa)) constitute a propeptide that is removed on maturation. Low complexity predominate over residues 82–96 (ANAEPLAAANAEPSA). Positions 82–114 (ANAEPLAAANAEPSAGPSPLAAAQDPPVVKMKG) are disordered. Gln105 carries the pyrrolidone carboxylic acid modification. Lys113 carries the post-translational modification Lysine amide.

Expressed by the venom gland.

The protein localises to the secreted. This chain is As-peptide 126, found in Anoplius samariensis (Solitary wasp).